The sequence spans 473 residues: Photosystem II CP43 reaction center protein (473 aa).

Positions 1–14 (MKTLYSLRRFYHVE) are excised as a propeptide. Thr-15 bears the N-acetylthreonine mark. The residue at position 15 (Thr-15) is a Phosphothreonine. Transmembrane regions (helical) follow at residues 69-93 (LFEVAHFVPEKPMYEQGLILLPHLA), 134-155 (LLGPETLEESFPFFGYVWKDRN), 178-200 (KALYFGGVYDTWAPGGGDVRKIT), 255-275 (KPFAWARRALVWSGEAYLSYS), and 291-312 (WFNNTAYPSEFYGPTGPEASQA). Glu-367 is a [CaMn4O5] cluster binding site. A helical membrane pass occupies residues 447 to 471 (RARAAAAGFEKGIDRDFEPVLSMTP).

It belongs to the PsbB/PsbC family. PsbC subfamily. In terms of assembly, PSII is composed of 1 copy each of membrane proteins PsbA, PsbB, PsbC, PsbD, PsbE, PsbF, PsbH, PsbI, PsbJ, PsbK, PsbL, PsbM, PsbT, PsbX, PsbY, PsbZ, Psb30/Ycf12, at least 3 peripheral proteins of the oxygen-evolving complex and a large number of cofactors. It forms dimeric complexes. Binds multiple chlorophylls and provides some of the ligands for the Ca-4Mn-5O cluster of the oxygen-evolving complex. It may also provide a ligand for a Cl- that is required for oxygen evolution. PSII binds additional chlorophylls, carotenoids and specific lipids. is required as a cofactor.

The protein resides in the plastid. It localises to the chloroplast thylakoid membrane. Its function is as follows. One of the components of the core complex of photosystem II (PSII). It binds chlorophyll and helps catalyze the primary light-induced photochemical processes of PSII. PSII is a light-driven water:plastoquinone oxidoreductase, using light energy to abstract electrons from H(2)O, generating O(2) and a proton gradient subsequently used for ATP formation. This chain is Photosystem II CP43 reaction center protein, found in Nicotiana tabacum (Common tobacco).